The primary structure comprises 313 residues: Porphobilinogen deaminase (313 aa).

Residue cysteine 242 is modified to S-(dipyrrolylmethanemethyl)cysteine.

The protein belongs to the HMBS family. As to quaternary structure, monomer. Dipyrromethane is required as a cofactor.

The catalysed reaction is 4 porphobilinogen + H2O = hydroxymethylbilane + 4 NH4(+). It functions in the pathway porphyrin-containing compound metabolism; protoporphyrin-IX biosynthesis; coproporphyrinogen-III from 5-aminolevulinate: step 2/4. In terms of biological role, tetrapolymerization of the monopyrrole PBG into the hydroxymethylbilane pre-uroporphyrinogen in several discrete steps. This Erwinia tasmaniensis (strain DSM 17950 / CFBP 7177 / CIP 109463 / NCPPB 4357 / Et1/99) protein is Porphobilinogen deaminase.